A 91-amino-acid chain; its full sequence is Gene 76 protein (91 aa).

The interval 58–81 is disordered; that stretch reads ELPSCDESPKGEARRDNDNRDGGK.

The polypeptide is Gene 76 protein (76) (Mycobacterium phage L5 (Mycobacteriophage L5)).